Here is a 395-residue protein sequence, read N- to C-terminus: Dual specificity protein phosphatase 4 (395 aa).

The residue at position 2 (valine 2) is an N-acetylvaline. The region spanning 42–160 (SGGKCLLLDC…FSSEYPEFCS (119 aa)) is the Rhodanese domain. The region spanning 196 to 337 (GPVEILPFLY…LLQFESQVLT (142 aa)) is the Tyrosine-protein phosphatase domain. Cysteine 281 acts as the Phosphocysteine intermediate in catalysis. Phosphoserine; by MAPK occurs at positions 387 and 392.

It belongs to the protein-tyrosine phosphatase family. Non-receptor class dual specificity subfamily. Hollow spherical complex composed of 24 subunits with pseudooctahedral symmetry, has a tetramer as the basic unit. Phosphorylation in the C-terminus by ERK1/2 inhibits proteasomal degradation and stabilizes the protein. As to expression, expressed at moderate levels in nearly all tissues and cells including brain, spleen, and testes with the higher expression in the heart and lung and lower expression in skeletal muscle and kidney. Undetectable in liver. Expressed in many areas of the brain with very strong expression in the hippocampus, piriform cortex, and the suprachiasmatic nucleus.

It is found in the nucleus. The enzyme catalyses O-phospho-L-tyrosyl-[protein] + H2O = L-tyrosyl-[protein] + phosphate. It carries out the reaction O-phospho-L-seryl-[protein] + H2O = L-seryl-[protein] + phosphate. It catalyses the reaction O-phospho-L-threonyl-[protein] + H2O = L-threonyl-[protein] + phosphate. Functionally, regulates mitogenic signal transduction by dephosphorylating both Thr and Tyr residues on MAP kinases ERK1 and ERK2. The sequence is that of Dual specificity protein phosphatase 4 (Dusp4) from Rattus norvegicus (Rat).